Consider the following 95-residue polypeptide: Aspartyl/glutamyl-tRNA(Asn/Gln) amidotransferase subunit C (95 aa).

The protein belongs to the GatC family. As to quaternary structure, heterotrimer of A, B and C subunits.

The enzyme catalyses L-glutamyl-tRNA(Gln) + L-glutamine + ATP + H2O = L-glutaminyl-tRNA(Gln) + L-glutamate + ADP + phosphate + H(+). It carries out the reaction L-aspartyl-tRNA(Asn) + L-glutamine + ATP + H2O = L-asparaginyl-tRNA(Asn) + L-glutamate + ADP + phosphate + 2 H(+). Its function is as follows. Allows the formation of correctly charged Asn-tRNA(Asn) or Gln-tRNA(Gln) through the transamidation of misacylated Asp-tRNA(Asn) or Glu-tRNA(Gln) in organisms which lack either or both of asparaginyl-tRNA or glutaminyl-tRNA synthetases. The reaction takes place in the presence of glutamine and ATP through an activated phospho-Asp-tRNA(Asn) or phospho-Glu-tRNA(Gln). This chain is Aspartyl/glutamyl-tRNA(Asn/Gln) amidotransferase subunit C, found in Thermodesulfovibrio yellowstonii (strain ATCC 51303 / DSM 11347 / YP87).